A 324-amino-acid polypeptide reads, in one-letter code: Glyoxylate/hydroxypyruvate reductase B (324 aa).

Residues R237 and E266 contribute to the active site. H285 functions as the Proton donor in the catalytic mechanism.

The protein belongs to the D-isomer specific 2-hydroxyacid dehydrogenase family. GhrB subfamily. In terms of assembly, homodimer.

It is found in the cytoplasm. It carries out the reaction glycolate + NADP(+) = glyoxylate + NADPH + H(+). The enzyme catalyses (R)-glycerate + NAD(+) = 3-hydroxypyruvate + NADH + H(+). The catalysed reaction is (R)-glycerate + NADP(+) = 3-hydroxypyruvate + NADPH + H(+). Catalyzes the NADPH-dependent reduction of glyoxylate and hydroxypyruvate into glycolate and glycerate, respectively. This is Glyoxylate/hydroxypyruvate reductase B from Escherichia coli (strain ATCC 8739 / DSM 1576 / NBRC 3972 / NCIMB 8545 / WDCM 00012 / Crooks).